The following is a 226-amino-acid chain: tRNA (guanine-N(1)-)-methyltransferase (226 aa).

S-adenosyl-L-methionine is bound by residues Gly-110 and 129 to 134; that span reads IGDYIL.

The protein belongs to the RNA methyltransferase TrmD family. As to quaternary structure, homodimer.

The protein localises to the cytoplasm. It carries out the reaction guanosine(37) in tRNA + S-adenosyl-L-methionine = N(1)-methylguanosine(37) in tRNA + S-adenosyl-L-homocysteine + H(+). Functionally, specifically methylates guanosine-37 in various tRNAs. The protein is tRNA (guanine-N(1)-)-methyltransferase of Malacoplasma penetrans (strain HF-2) (Mycoplasma penetrans).